We begin with the raw amino-acid sequence, 59 residues long: Large ribosomal subunit protein bL32 (59 aa).

Belongs to the bacterial ribosomal protein bL32 family.

This Lactiplantibacillus plantarum (strain ATCC BAA-793 / NCIMB 8826 / WCFS1) (Lactobacillus plantarum) protein is Large ribosomal subunit protein bL32.